A 176-amino-acid polypeptide reads, in one-letter code: Ferredoxin-type protein NapF (176 aa).

4Fe-4S ferredoxin-type domains lie at 39–68 (VENS…KGDA) and 71–100 (PEVR…PRDQ). Residues C48, C51, C54, C58, C80, C83, C86, C90, C113, C121, C124, C128, C152, C155, C158, and C162 each contribute to the [4Fe-4S] cluster site. 4Fe-4S ferredoxin-type domains lie at 119–138 (IECR…FKLQ) and 143–172 (AQPL…MNDL).

This sequence belongs to the NapF family. In terms of assembly, interacts with the cytoplasmic NapA precursor. [4Fe-4S] cluster serves as cofactor.

The protein localises to the cytoplasm. In terms of biological role, could be involved in the maturation of NapA, the catalytic subunit of the periplasmic nitrate reductase, before its export into the periplasm. This chain is Ferredoxin-type protein NapF, found in Haemophilus influenzae (strain ATCC 51907 / DSM 11121 / KW20 / Rd).